We begin with the raw amino-acid sequence, 157 residues long: Deoxyuridine 5'-triphosphate nucleotidohydrolase (157 aa).

Substrate contacts are provided by residues 76–78, Asn89, 93–95, and Lys103; these read RSG and TID.

This sequence belongs to the dUTPase family. The cofactor is Mg(2+).

It carries out the reaction dUTP + H2O = dUMP + diphosphate + H(+). Its pathway is pyrimidine metabolism; dUMP biosynthesis; dUMP from dCTP (dUTP route): step 2/2. Functionally, this enzyme is involved in nucleotide metabolism: it produces dUMP, the immediate precursor of thymidine nucleotides and it decreases the intracellular concentration of dUTP so that uracil cannot be incorporated into DNA. This chain is Deoxyuridine 5'-triphosphate nucleotidohydrolase, found in Brucella abortus (strain 2308).